Consider the following 625-residue polypeptide: Chaperone protein DnaK (625 aa).

Thr-197 carries the post-translational modification Phosphothreonine; by autocatalysis. A disordered region spans residues 598–625; sequence MYKKDDNASGEQSGGKKKDDDVIDAEVE.

Belongs to the heat shock protein 70 family.

In terms of biological role, acts as a chaperone. This is Chaperone protein DnaK from Campylobacter curvus (strain 525.92).